Reading from the N-terminus, the 695-residue chain is Potassium voltage-gated channel subfamily KQT member 4 (695 aa).

The segment at methionine 1–alanine 21 is disordered. Topologically, residues methionine 1 to glycine 96 are cytoplasmic. Arginine 93 serves as a coordination point for a 1,2-diacyl-sn-glycero-3-phospho-(1D-myo-inositol-4,5-bisphosphate). Residues tryptophan 97–leucine 118 traverse the membrane as a helical segment. The Extracellular segment spans residues serine 119–asparagine 129. Residues glutamate 130–tryptophan 152 traverse the membrane as a helical segment. Residues serine 153–arginine 168 lie on the Cytoplasmic side of the membrane. The helical transmembrane segment at phenylalanine 169–alanine 191 threads the bilayer. Residue lysine 172 coordinates a 1,2-diacyl-sn-glycero-3-phospho-(1D-myo-inositol-4,5-bisphosphate). The Extracellular portion of the chain corresponds to glycine 192–alanine 202. A helical; Voltage-sensor membrane pass occupies residues leucine 203 to threonine 223. 4 residues coordinate a 1,2-diacyl-sn-glycero-3-phospho-(1D-myo-inositol-4,5-bisphosphate): arginine 219, arginine 220, lysine 225, and serine 235. Residues tryptophan 224–serine 235 are Cytoplasmic-facing. Residues lysine 236 to leucine 258 form a helical membrane-spanning segment. Residues alanine 259–tyrosine 270 lie on the Extracellular side of the membrane. An intramembrane region (pore-forming) is located at residues alanine 271–histidine 292. Threonine 293 is a topological domain (extracellular). A helical transmembrane segment spans residues tryptophan 294 to phenylalanine 322. At alanine 323–aspartate 695 the chain is on the cytoplasmic side. A 1,2-diacyl-sn-glycero-3-phospho-(1D-myo-inositol-4,5-bisphosphate) is bound by residues histidine 330 and lysine 333. The interaction with CALM stretch occupies residues alanine 342–arginine 351. Disordered stretches follow at residues arginine 400–glutamine 480 and arginine 496–lysine 515. Polar residues-rich tracts occupy residues glycine 443–serine 452 and threonine 463–glutamine 480. The tract at residues arginine 535–phenylalanine 549 is interaction with CALM. Positions lysine 546–alanine 650 are C-terminal assembly domain (tetramerization). Residues valine 587 to aspartate 606 form a disordered region. Positions proline 591–serine 605 are enriched in basic and acidic residues. Residues methionine 615–leucine 636 adopt a coiled-coil conformation.

Belongs to the potassium channel family. KQT (TC 1.A.1.15) subfamily. Kv7.4/KCNQ4 sub-subfamily. Homotetramer. Interacts (via C-terminus) with calmodulin; forms a heterooctameric structure (with 4:4 KCNQ1:CALM stoichiometry); the interaction is calcium-independent, constitutive, participates in the proper assembly of a functional channel. The interaction with calcium-free CALM controls channel trafficking whereas interaction with calcium-bound CALM regulates channel gating. May form a functional heteromultimeric channel with KCNQ3. Interacts with HSP90AB1; promotes cell surface expression of KCNQ4. In terms of tissue distribution, expressed in the outer, but not the inner, sensory hair cells of the cochlea. Slightly expressed in heart, brain and skeletal muscle.

The protein localises to the basal cell membrane. The catalysed reaction is K(+)(in) = K(+)(out). Two molecules of phosphatidylinositol-4,5-bisphosphate (PIP2-I and PIP2-II) are essential to activate KCNQ4 channel by inducing the coupling of the voltage-sensing domain (VSD) and the pore-forming domain (PD). Upon channel activation, PIP2-I and PIP2-II disrupt the VSD-calmodulin/CALM interaction, causing the release of CALM from the VSD which triggers the opening of the gate. Calcium suppresses KCNQ4 channel current through calcium-bound CALM C-terminus. Therefore CALM acts as calcium sensor that controls channel activity. ML213 potentiates KCNQ4 channel. KCNQ4 channel is blocked by linopirdin, XE991 and bepridil, whereas clofilium is without significant effect. Muscarinic agonist oxotremorine-M strongly suppress KCNQ4 current in CHO cells in which cloned KCNQ4 channels were coexpressed with M1 muscarinic receptors. Functionally, pore-forming subunit of the voltage-gated potassium (Kv) channel involved in the regulation of sensory cells excitability in the cochlea. KCNQ4/Kv7.4 channel is composed of 4 pore-forming subunits assembled as tetramers. Promotes the outflow of potassium ions in the repolarization phase of action potential which plays a role in regulating membrane potential of excitable cells. The channel conducts a slowly activating and deactivating current. Current often shows some inward rectification at positive potentials. Channel may be selectively permeable in vitro to other cations besides potassium, in decreasing order of affinity K(+) = Rb(+) &gt; Cs(+) &gt; Na(+). Important for normal physiological function of inner ear such as sensory perception of sound. In Homo sapiens (Human), this protein is Potassium voltage-gated channel subfamily KQT member 4.